The following is a 440-amino-acid chain: MVHGYKGVQFQNWAKTYGCSPEMYYQPTSVGEVREVLALARQQNKKVKVVGGGHSPSDIACTDGFMIHMGKMNRVLQVDKEKKQVTVEAGILLTDLHPQLDKHGLALSNLGAVSDVTVGGVIGSGTHNTGIKHGILATQVVALTLMKADGTVLECSESSNADVFQAARVHLGCLGVILTVTLQCVPQFHLLETSFPSTLKEVLDNLDSHLKKSEYFRFLWFPHSENVSIIYQDHTNKEPSSASNWFWDYAIGFYLLEFLLWTSTYLPRLVGWINRFFFWLLFNCKKESSNLSHKIFSYECRFKQHVQDWAIPREKTKEALLELKAMLEAHPKVVAHYPVEVRFTRGDDILLSPCFQRDSCYMNIIMYRPYGKDVPRLDYWLAYETIMKKFGGRPHWAKAHNCTRKDFEKMYPAFHKFCDIREKLDPTGMFLNSYLEKVFY.

Positions 17–187 constitute an FAD-binding PCMH-type domain; the sequence is YGCSPEMYYQ…LTVTLQCVPQ (171 aa). His54 bears the Pros-8alpha-FAD histidine mark. A helical transmembrane segment spans residues 251–273; it reads IGFYLLEFLLWTSTYLPRLVGWI.

Belongs to the oxygen-dependent FAD-linked oxidoreductase family. It depends on FAD as a cofactor. Highly expressed in liver.

The protein resides in the microsome membrane. It localises to the endoplasmic reticulum membrane. It carries out the reaction L-gulono-1,4-lactone + O2 = L-ascorbate + H2O2 + H(+). It functions in the pathway cofactor biosynthesis; L-ascorbate biosynthesis via UDP-alpha-D-glucuronate pathway; L-ascorbate from UDP-alpha-D-glucuronate: step 4/4. In terms of biological role, oxidizes L-gulono-1,4-lactone to hydrogen peroxide and L-xylo-hexulonolactone which spontaneously isomerizes to L-ascorbate. The polypeptide is L-gulonolactone oxidase (Gulo) (Mus musculus (Mouse)).